Here is a 159-residue protein sequence, read N- to C-terminus: 2-C-methyl-D-erythritol 2,4-cyclodiphosphate synthase (159 aa).

A divalent metal cation is bound by residues Asp-10 and His-12. Residues 10–12 (DVH) and 36–37 (HS) each bind 4-CDP-2-C-methyl-D-erythritol 2-phosphate. His-44 lines the a divalent metal cation pocket. Residues 58 to 60 (DIG), 63 to 67 (FSDTD), and Arg-144 each bind 4-CDP-2-C-methyl-D-erythritol 2-phosphate.

This sequence belongs to the IspF family. As to quaternary structure, homotrimer. The cofactor is a divalent metal cation.

It carries out the reaction 4-CDP-2-C-methyl-D-erythritol 2-phosphate = 2-C-methyl-D-erythritol 2,4-cyclic diphosphate + CMP. It participates in isoprenoid biosynthesis; isopentenyl diphosphate biosynthesis via DXP pathway; isopentenyl diphosphate from 1-deoxy-D-xylulose 5-phosphate: step 4/6. In terms of biological role, involved in the biosynthesis of isopentenyl diphosphate (IPP) and dimethylallyl diphosphate (DMAPP), two major building blocks of isoprenoid compounds. Catalyzes the conversion of 4-diphosphocytidyl-2-C-methyl-D-erythritol 2-phosphate (CDP-ME2P) to 2-C-methyl-D-erythritol 2,4-cyclodiphosphate (ME-CPP) with a corresponding release of cytidine 5-monophosphate (CMP). This chain is 2-C-methyl-D-erythritol 2,4-cyclodiphosphate synthase, found in Paraburkholderia xenovorans (strain LB400).